We begin with the raw amino-acid sequence, 345 residues long: Cysteinyl leukotriene receptor 2 (345 aa).

The Extracellular portion of the chain corresponds to 1-43; that stretch reads MERKLMSLLPSISLSEMEPNSTLGNHNSNRSCTTENFKREFYP. 2 N-linked (GlcNAc...) asparagine glycosylation sites follow: Asn20 and Asn29. Residues 44–64 traverse the membrane as a helical segment; the sequence is IVYLVIFIWGALGNGFSIYVF. The Cytoplasmic portion of the chain corresponds to 65–73; the sequence is LKPYKKSTS. The helical transmembrane segment at 74 to 94 threads the bilayer; that stretch reads VNVFMLNLAISDLLFTITLPF. The Extracellular portion of the chain corresponds to 95-124; the sequence is RVDYYLRGSNXIFGDTPCRIMSYSMYVNMY. A disulfide bridge links Cys112 with Cys188. The chain crosses the membrane as a helical span at residues 125 to 145; that stretch reads SSIYFLTVLSVVRFLATVHPF. Residues 146 to 154 are Cytoplasmic-facing; the sequence is RLLHTTSIK. The chain crosses the membrane as a helical span at residues 155–175; it reads NAWILCGVIWIFIMASSTVLL. Residues 176–205 lie on the Extracellular side of the membrane; that stretch reads KNGSEQKDNVTLCLELNSNKVTKLKTMNYV. Residues Asn177 and Asn184 are each glycosylated (N-linked (GlcNAc...) asparagine). Residues 206-226 form a helical membrane-spanning segment; the sequence is ALVVGFVLPFGTLSICYLLII. The Cytoplasmic segment spans residues 227–246; that stretch reads RALLKVEVPESGLRLSHRKA. A helical transmembrane segment spans residues 247–267; sequence LITVIIALIIFLLCFLPYHVL. Residues 268 to 287 lie on the Extracellular side of the membrane; sequence RTLHLLEWKADKCKDRLHKA. The chain crosses the membrane as a helical span at residues 288-308; sequence VAVTLALAAANSCFNPFLYYF. The Cytoplasmic segment spans residues 309 to 345; the sequence is AGENFKDRLKSALRKGRPQKTRCGFSVCVWLKKETRV.

Belongs to the G-protein coupled receptor 1 family.

The protein resides in the cell membrane. Functionally, receptor for cysteinyl leukotrienes. The response is mediated via a G-protein that activates a phosphatidylinositol-calcium second messenger system. The protein is Cysteinyl leukotriene receptor 2 (CYSLTR2) of Sus scrofa (Pig).